A 159-amino-acid polypeptide reads, in one-letter code: Ribosomal RNA large subunit methyltransferase H (159 aa).

Residues leucine 76, glycine 108, and 127-132 (FGRLTL) contribute to the S-adenosyl-L-methionine site.

It belongs to the RNA methyltransferase RlmH family. As to quaternary structure, homodimer.

It is found in the cytoplasm. It catalyses the reaction pseudouridine(1915) in 23S rRNA + S-adenosyl-L-methionine = N(3)-methylpseudouridine(1915) in 23S rRNA + S-adenosyl-L-homocysteine + H(+). Specifically methylates the pseudouridine at position 1915 (m3Psi1915) in 23S rRNA. The protein is Ribosomal RNA large subunit methyltransferase H of Listeria monocytogenes serovar 1/2a (strain ATCC BAA-679 / EGD-e).